The chain runs to 391 residues: Tryptophan synthase beta chain 2 (391 aa).

Lys83 is modified (N6-(pyridoxal phosphate)lysine).

It belongs to the TrpB family. As to quaternary structure, tetramer of two alpha and two beta chains. Pyridoxal 5'-phosphate is required as a cofactor.

The enzyme catalyses (1S,2R)-1-C-(indol-3-yl)glycerol 3-phosphate + L-serine = D-glyceraldehyde 3-phosphate + L-tryptophan + H2O. It participates in amino-acid biosynthesis; L-tryptophan biosynthesis; L-tryptophan from chorismate: step 5/5. Its function is as follows. The beta subunit is responsible for the synthesis of L-tryptophan from indole and L-serine. The chain is Tryptophan synthase beta chain 2 (trpB2) from Chlamydia caviae (strain ATCC VR-813 / DSM 19441 / 03DC25 / GPIC) (Chlamydophila caviae).